We begin with the raw amino-acid sequence, 100 residues long: Urease subunit gamma (100 aa).

This sequence belongs to the urease gamma subunit family. In terms of assembly, heterotrimer of UreA (gamma), UreB (beta) and UreC (alpha) subunits. Three heterotrimers associate to form the active enzyme.

It is found in the cytoplasm. It carries out the reaction urea + 2 H2O + H(+) = hydrogencarbonate + 2 NH4(+). It participates in nitrogen metabolism; urea degradation; CO(2) and NH(3) from urea (urease route): step 1/1. The protein is Urease subunit gamma of Mycolicibacterium vanbaalenii (strain DSM 7251 / JCM 13017 / BCRC 16820 / KCTC 9966 / NRRL B-24157 / PYR-1) (Mycobacterium vanbaalenii).